We begin with the raw amino-acid sequence, 95 residues long: MAVFLIAYDLVNERRGTHDYQPLWDELKRLGAHRTQFSLWLVSANNTTAEVRQHFQQFVDSNDRIWVTRLRKSQYDYANAIGGTNNWLSNNPPEA.

A Mg(2+)-binding site is contributed by aspartate 9.

Belongs to the CRISPR-associated endoribonuclease Cas2 protein family. As to quaternary structure, homodimer, forms a heterotetramer with a Cas1 homodimer. Requires Mg(2+) as cofactor.

Functionally, CRISPR (clustered regularly interspaced short palindromic repeat), is an adaptive immune system that provides protection against mobile genetic elements (viruses, transposable elements and conjugative plasmids). CRISPR clusters contain sequences complementary to antecedent mobile elements and target invading nucleic acids. CRISPR clusters are transcribed and processed into CRISPR RNA (crRNA). Functions as a ssRNA-specific endoribonuclease. Involved in the integration of spacer DNA into the CRISPR cassette. The protein is CRISPR-associated endoribonuclease Cas2 of Methylorubrum extorquens (strain CM4 / NCIMB 13688) (Methylobacterium extorquens).